The primary structure comprises 304 residues: Eukaryotic translation initiation factor 2 subunit alpha (304 aa).

An S1 motif domain is found at 17-88; sequence DDIVMVNVQQ…EKGYIDLSKR (72 aa). S52 carries the phosphoserine; by GCN2 modification. A disordered region spans residues 283–304; the sequence is LESKELDNRSDSEDDEDESDDE. Residues 284–293 show a composition bias toward basic and acidic residues; the sequence is ESKELDNRSD. S292 and S294 each carry phosphoserine. Over residues 294–304 the composition is skewed to acidic residues; the sequence is SEDDEDESDDE.

This sequence belongs to the eIF-2-alpha family. Eukaryotic translation initiation factor 2 eIF2 is a heterotrimeric complex composed of an alpha, a beta and a gamma subunit. The factors eIF-1, eIF-2, eIF-3, TIF5/eIF-5 and methionyl-tRNAi form a multifactor complex (MFC) that may bind to the 40S ribosome. Interacts with CDC123; the interaction is direct. Interacts with GCD1. In terms of processing, phosphorylated; phosphorylation on Ser-52 by the GCN2 protein kinase occurs in response to low amino acid, carbon, or purine availability. Phosphorylation inhibits the guanine nucleotide exchange factor activity of the eIF2B complex.

It localises to the cytoplasm. It is found in the cytosol. Its function is as follows. eIF-2 functions in the early steps of protein synthesis by forming a ternary complex with GTP and initiator tRNA. This complex binds to a 40S ribosomal subunit, followed by mRNA binding to form a 43S pre-initiation complex. Junction of the 60S ribosomal subunit to form the 80S initiation complex is preceded by hydrolysis of the GTP bound to eIF-2 and release of an eIF-2-GDP binary complex. In order for eIF-2 to recycle and catalyze another round of initiation, the GDP bound to eIF-2 must exchange with GTP by way of a reaction catalyzed by eIF2B. This Saccharomyces cerevisiae (strain ATCC 204508 / S288c) (Baker's yeast) protein is Eukaryotic translation initiation factor 2 subunit alpha.